Consider the following 177-residue polypeptide: Adenine phosphoribosyltransferase (177 aa).

The protein belongs to the purine/pyrimidine phosphoribosyltransferase family. As to quaternary structure, homodimer.

The protein resides in the cytoplasm. It carries out the reaction AMP + diphosphate = 5-phospho-alpha-D-ribose 1-diphosphate + adenine. It participates in purine metabolism; AMP biosynthesis via salvage pathway; AMP from adenine: step 1/1. Its function is as follows. Catalyzes a salvage reaction resulting in the formation of AMP, that is energically less costly than de novo synthesis. This is Adenine phosphoribosyltransferase from Rhodococcus opacus (strain B4).